The primary structure comprises 90 residues: U7-theraphotoxin-Hhn1a 3 (90 aa).

An N-terminal signal peptide occupies residues 1–26 (MKTAIFTVVLALAVFAVLSFGWEANG). A propeptide spanning residues 27–50 (KALSEEFTELIHEKEAASETEARE) is cleaved from the precursor. 3 disulfides stabilise this stretch: Cys51–Cys65, Cys58–Cys70, and Cys64–Cys81.

It belongs to the neurotoxin 10 (Hwtx-1) family. 13 (Hntx-13) subfamily. Expressed by the venom gland.

It is found in the secreted. In terms of biological role, ion channel inhibitor. In Cyriopagopus hainanus (Chinese bird spider), this protein is U7-theraphotoxin-Hhn1a 3.